We begin with the raw amino-acid sequence, 177 residues long: Ubiquinol-cytochrome c reductase iron-sulfur subunit (177 aa).

A helical membrane pass occupies residues 18–38 (IVLTASSVAAVGAACAFWPII). One can recognise a Rieske domain in the interval 88–175 (ARAVKMSELI…YIFISDKKIR (88 aa)). [2Fe-2S] cluster is bound by residues Cys120, His122, Cys139, and His142. The cysteines at positions 125 and 141 are disulfide-linked.

Belongs to the Rieske iron-sulfur protein family. The main subunits of complex b-c1 are: cytochrome b, cytochrome c1 and the Rieske protein. [2Fe-2S] cluster serves as cofactor.

Its subcellular location is the cell membrane. It catalyses the reaction a quinol + 2 Fe(III)-[cytochrome c](out) = a quinone + 2 Fe(II)-[cytochrome c](out) + 2 H(+)(out). Component of the ubiquinol-cytochrome c reductase complex (complex III or cytochrome b-c1 complex), which is a respiratory chain that generates an electrochemical potential coupled to ATP synthesis. The chain is Ubiquinol-cytochrome c reductase iron-sulfur subunit (petA) from Rickettsia prowazekii (strain Madrid E).